Consider the following 198-residue polypeptide: Probable GTP-binding protein EngB (198 aa).

The EngB-type G domain maps to 21-195 (NFSEVAFLGR…EDIIIDQTLG (175 aa)). Residues 29–36 (GRSNVGKS), 56–60 (GKTQL), 81–84 (DLPG), 151–154 (TKCD), and 174–176 (VSN) contribute to the GTP site. 2 residues coordinate Mg(2+): Ser-36 and Thr-58.

This sequence belongs to the TRAFAC class TrmE-Era-EngA-EngB-Septin-like GTPase superfamily. EngB GTPase family. Mg(2+) is required as a cofactor.

In terms of biological role, necessary for normal cell division and for the maintenance of normal septation. This is Probable GTP-binding protein EngB from Campylobacter jejuni subsp. jejuni serotype O:6 (strain 81116 / NCTC 11828).